Consider the following 525-residue polypeptide: Bifunctional enzyme NanE/NanK (525 aa).

Positions 1–241 (MRGSPRNLCR…DAVESAAKPS (241 aa)) are manNAc-6-P epimerase. Residues 242–525 (SPVLAFDIGG…VADLAATYFS (284 aa)) form a manNAc kinase region. Residues 246-253 (AFDIGGTK) and 372-379 (GIGGGIVL) contribute to the ATP site.

The protein in the N-terminal section; belongs to the NanE family. In the C-terminal section; belongs to the ROK (NagC/XylR) family. NanK subfamily.

The catalysed reaction is an N-acyl-D-glucosamine 6-phosphate = an N-acyl-D-mannosamine 6-phosphate. The enzyme catalyses an N-acyl-D-mannosamine + ATP = an N-acyl-D-mannosamine 6-phosphate + ADP + H(+). The protein operates within amino-sugar metabolism; N-acetylneuraminate degradation; D-fructose 6-phosphate from N-acetylneuraminate: step 2/5. It functions in the pathway amino-sugar metabolism; N-acetylneuraminate degradation; D-fructose 6-phosphate from N-acetylneuraminate: step 3/5. Converts N-acetylmannosamine-6-phosphate (ManNAc-6-P) to N-acetylglucosamine-6-phosphate (GlcNAc-6-P). In terms of biological role, catalyzes the phosphorylation of N-acetylmannosamine (ManNAc) to ManNAc-6-P. In Brucella suis biovar 1 (strain 1330), this protein is Bifunctional enzyme NanE/NanK (nanEK).